Reading from the N-terminus, the 380-residue chain is Polygalacturonase 2 (380 aa).

An N-terminal signal peptide occupies residues 1–20 (MIAGSKLLMLGLFGALAVHA). Residues 21 to 38 (LPEPAKAQVTAAPKLEER) constitute a propeptide that is removed on maturation. A disulfide bridge links Cys-42 with Cys-60. PbH1 repeat units follow at residues 173-204 (ATDL…DVGS) and 205-226 (STGI…AVNS). Asp-219 serves as the catalytic Proton donor. An intrachain disulfide couples Cys-221 to Cys-237. His-241 is an active-site residue. PbH1 repeat units lie at residues 256–277 (VANV…RIKT), 285–307 (VKNV…VIEQ), and 319–364 (TDGV…SVSG). N-linked (GlcNAc...) asparagine glycosylation occurs at Asn-287. Cystine bridges form between Cys-347–Cys-352 and Cys-371–Cys-380.

The protein belongs to the glycosyl hydrolase 28 family.

The protein resides in the secreted. It carries out the reaction (1,4-alpha-D-galacturonosyl)n+m + H2O = (1,4-alpha-D-galacturonosyl)n + (1,4-alpha-D-galacturonosyl)m.. The protein is Polygalacturonase 2 (PG2) of Penicillium olsonii.